The following is a 107-amino-acid chain: uncharacterized protein (107 aa).

This is an uncharacterized protein from Bacillus subtilis (strain 168).